We begin with the raw amino-acid sequence, 526 residues long: tRNA-2-methylthio-N(6)-dimethylallyladenosine synthase (526 aa).

The MTTase N-terminal domain occupies 14 to 130 (RTYQVRTYGC…LPTLLERARH (117 aa)). Residues C23, C59, C93, C167, C171, and C174 each contribute to the [4Fe-4S] cluster site. Residues 153 to 401 (RESAYAGWVS…IELQERISLE (249 aa)) form the Radical SAM core domain. The TRAM domain maps to 404-483 (QAQVGRTLEL…PHHLIADGAL (80 aa)).

This sequence belongs to the methylthiotransferase family. MiaB subfamily. As to quaternary structure, monomer. [4Fe-4S] cluster is required as a cofactor.

The protein localises to the cytoplasm. The catalysed reaction is N(6)-dimethylallyladenosine(37) in tRNA + (sulfur carrier)-SH + AH2 + 2 S-adenosyl-L-methionine = 2-methylsulfanyl-N(6)-dimethylallyladenosine(37) in tRNA + (sulfur carrier)-H + 5'-deoxyadenosine + L-methionine + A + S-adenosyl-L-homocysteine + 2 H(+). Functionally, catalyzes the methylthiolation of N6-(dimethylallyl)adenosine (i(6)A), leading to the formation of 2-methylthio-N6-(dimethylallyl)adenosine (ms(2)i(6)A) at position 37 in tRNAs that read codons beginning with uridine. The sequence is that of tRNA-2-methylthio-N(6)-dimethylallyladenosine synthase from Mycobacterium sp. (strain JLS).